A 121-amino-acid polypeptide reads, in one-letter code: Small ribosomal subunit protein uS13 (121 aa).

The disordered stretch occupies residues 97 to 121 (VRGQRTRTNARTRRGARKTVAGKKK). Over residues 100-121 (QRTRTNARTRRGARKTVAGKKK) the composition is skewed to basic residues.

The protein belongs to the universal ribosomal protein uS13 family. As to quaternary structure, part of the 30S ribosomal subunit. Forms a loose heterodimer with protein S19. Forms two bridges to the 50S subunit in the 70S ribosome.

In terms of biological role, located at the top of the head of the 30S subunit, it contacts several helices of the 16S rRNA. In the 70S ribosome it contacts the 23S rRNA (bridge B1a) and protein L5 of the 50S subunit (bridge B1b), connecting the 2 subunits; these bridges are implicated in subunit movement. Contacts the tRNAs in the A and P-sites. The protein is Small ribosomal subunit protein uS13 of Prochlorococcus marinus (strain MIT 9303).